Reading from the N-terminus, the 62-residue chain is MNNKIKLNFNYVLVIFFTTMVYTCKLNVHFKSELLNIREKYCNLIFDKKMAFIPMVSLKKNR.

Its subcellular location is the plastid. The protein localises to the chloroplast. This is an uncharacterized protein from Porphyra purpurea (Red seaweed).